A 528-amino-acid polypeptide reads, in one-letter code: Golgi resident protein GCP60 (528 aa).

Residues Met1–Glu71 form a disordered region. N-acetylalanine; in Golgi resident protein GCP60, N-terminally processed is present on Ala2. Residue Ser13 is modified to Phosphoserine. Thr18 carries the phosphothreonine modification. Phosphoserine occurs at positions 20, 43, and 47. A compositionally biased stretch (pro residues) spans Leu34–Pro45. The segment covering Ser54–Ala69 has biased composition (low complexity). The 92-residue stretch at Leu83 to Thr174 folds into the ACB domain. Residues Thr174 to Gln257 adopt a coiled-coil conformation. Positions Glu182–Arg230 are disordered. A charged amino-acid region (CAR) region spans residues Glu182–Glu240. The q domain; Interaction with PI4KB, TBC1D22A and TBC1D22B stretch occupies residues Gln241–Gln308. The interval Asn335–Pro362 is disordered. Residues Thr340–Glu350 show a composition bias toward basic and acidic residues. The GOLD domain occupies Lys384–Tyr526. Positions Leu514 to Arg516 are membrane-binding.

As to quaternary structure, homodimer. Interacts with the C-terminal cytoplasmic domain of giantin/GOLGB1. Interacts with PBR and PKA regulatory subunit RI-alpha. Does not interact with PKA regulatory subunit RI-beta nor PKA regulatory subunit RII-alpha. Interacts (via Q domain) with PI4KB (via N-terminus). Interacts (via Q domain) with TBC1D22A and TBC1D22B; interactions with PI4KB and with TBC1D22A and TBC1D22B are mutually exclusive. Interacts with C10ORF76 and RAB11B. (Microbial infection) Interacts (via GOLD domain) with 3A proteins from various picornaviruses, including poliovirus, enterovirus A71, enterovirus D68, hepatitis A virus, human parechovirus 1, poliovirus, Human rhinovirus-14 (Hrv-14), coysackievirus B2, coysackievirus B3, coysackievirus B5, Aichi virus and human klassevirus. Interacts (via GOLD domain) with Aichi virus protein 3A; this interaction allows the formation of a 3A/ACBD3/PI4KB complex in order to synthesize PI4P at the viral RNA replication sites. Interacts with Aichi virus protein 2B. Interacts with Aichi virus protein 2C. As to expression, ubiquitous, with highest expression in testis and ovary.

Its subcellular location is the golgi apparatus membrane. It localises to the mitochondrion. Involved in the maintenance of Golgi structure by interacting with giantin, affecting protein transport between the endoplasmic reticulum and Golgi. Involved in hormone-induced steroid biosynthesis in testicular Leydig cells. Recruits PI4KB to the Golgi apparatus membrane; enhances the enzyme activity of PI4KB activity via its membrane recruitment thereby increasing the local concentration of the substrate in the vicinity of the kinase. Its function is as follows. (Microbial infection) Plays an essential role in Aichi virus RNA replication by recruiting PI4KB at the viral replication sites. In Homo sapiens (Human), this protein is Golgi resident protein GCP60 (ACBD3).